Reading from the N-terminus, the 75-residue chain is Penaeidin-3k (75 aa).

Positions 1-19 (MRLVVCLVFLASFALVCQG) are cleaved as a signal peptide. Pyrrolidone carboxylic acid is present on glutamine 20. 3 cysteine pairs are disulfide-bonded: cysteine 44–cysteine 59, cysteine 48–cysteine 66, and cysteine 60–cysteine 67. Serine 74 carries the serine amide modification.

The protein belongs to the penaeidin family.

It is found in the cytoplasmic granule. Its function is as follows. Antibacterial and antifungal activity. Presents chitin-binding activity. The sequence is that of Penaeidin-3k from Penaeus setiferus (Atlantic white shrimp).